We begin with the raw amino-acid sequence, 207 residues long: LexA repressor (207 aa).

The segment at residues 28 to 48 (RAEISRELGFKSANAAEEHLK) is a DNA-binding region (H-T-H motif). Catalysis depends on for autocatalytic cleavage activity residues Ser123 and Lys160.

The protein belongs to the peptidase S24 family. In terms of assembly, homodimer.

It carries out the reaction Hydrolysis of Ala-|-Gly bond in repressor LexA.. In terms of biological role, represses a number of genes involved in the response to DNA damage (SOS response), including recA and lexA. In the presence of single-stranded DNA, RecA interacts with LexA causing an autocatalytic cleavage which disrupts the DNA-binding part of LexA, leading to derepression of the SOS regulon and eventually DNA repair. This chain is LexA repressor, found in Haemophilus influenzae (strain 86-028NP).